The primary structure comprises 151 residues: Globin (151 aa).

In terms of domain architecture, Globin spans 2-151 (SLSDADKKAL…AAFNETLKKA (150 aa)). Histidine 100 contacts heme b.

Belongs to the globin family.

In Biomphalaria glabrata (Bloodfluke planorb), this protein is Globin.